A 449-amino-acid polypeptide reads, in one-letter code: Phosphoglucosamine mutase (449 aa).

S99 acts as the Phosphoserine intermediate in catalysis. Mg(2+) is bound by residues S99, D239, D241, and D243. S99 is modified (phosphoserine).

Belongs to the phosphohexose mutase family. Requires Mg(2+) as cofactor. In terms of processing, activated by phosphorylation.

It catalyses the reaction alpha-D-glucosamine 1-phosphate = D-glucosamine 6-phosphate. Catalyzes the conversion of glucosamine-6-phosphate to glucosamine-1-phosphate. The protein is Phosphoglucosamine mutase of Finegoldia magna (strain ATCC 29328 / DSM 20472 / WAL 2508) (Peptostreptococcus magnus).